We begin with the raw amino-acid sequence, 858 residues long: Zinc finger protein ZXDC (858 aa).

Disordered stretches follow at residues 1-73 (MDLP…GGDS), 85-108 (DTHGQEEAEPDSGASPTEQVPAAA), and 142-175 (AAPSLHPATTPGLEPSSAAASRRGPVAASAGSPA). Positions 59–68 (APGPSPPPPE) are enriched in pro residues. A compositionally biased stretch (low complexity) spans 142 to 152 (AAPSLHPATTP). C2H2-type zinc fingers lie at residues 176–200 (YRCPEPQCALSFAKKHQLKVHLLTH), 209–233 (FKCPLDGCGWAFTTSYKLKRHLQSH), 239–263 (FSCPVGGCGKKFTTVYNLKAHMKGH), 269–291 (FKCEVCAERFPTHAKLNSHQRSH), 298–322 (YKCDFPGCEKTFITVSALFSHNRAH), 329–353 (FSCSFPGCNKQYDKACRLKIHLRSH), 359–383 (FICDSDSCGWTFTSMSKLLRHKRKH), 389–413 (FTCPVEGCGKSFTRAEHLKGHSITH), 419–443 (FECPVEGCCARFSARSSLYIHSKKH), and 452–477 (SRCPVSSCNRLFTSKHSMKAHVVRQH). The span at 624–634 (DSPALTPSNNL) shows a compositional bias: polar residues. The tract at residues 624–652 (DSPALTPSNNLTAPGTTPTSSDTTQETGS) is disordered. The span at 635–651 (TAPGTTPTSSDTTQETG) shows a compositional bias: low complexity. K661 is covalently cross-linked (Glycyl lysine isopeptide (Lys-Gly) (interchain with G-Cter in SUMO)). 2 disordered regions span residues 671–714 (DVVQ…LESG) and 727–751 (VKKKKQKGTGSDEGASDSAHRKVKG). The segment covering 681 to 692 (GPSQSVLSSSTE) has biased composition (polar residues).

It belongs to the ZXD family. As to quaternary structure, self-associates. Interacts with ZXDB and CIITA. Post-translationally, sumoylated at Lys-661 with SUMO1, SUMO2 and SUMO3; sumoylation enhances the activity of the transcriptional activation domain.

Its subcellular location is the nucleus. Its function is as follows. Cooperates with CIITA to promote transcription of MHC class I and MHC class II genes. The sequence is that of Zinc finger protein ZXDC (Zxdc) from Mus musculus (Mouse).